The following is a 593-amino-acid chain: Aspartate--tRNA ligase (593 aa).

Position 180 (Glu180) interacts with L-aspartate. Residues 204–207 (QIFK) are aspartate. Arg226 lines the L-aspartate pocket. ATP contacts are provided by residues 226–228 (RDE) and Gln235. His453 contributes to the L-aspartate binding site. Glu487 contacts ATP. Arg494 lines the L-aspartate pocket. An ATP-binding site is contributed by 539-542 (GLDR).

It belongs to the class-II aminoacyl-tRNA synthetase family. Type 1 subfamily. Homodimer.

Its subcellular location is the cytoplasm. It catalyses the reaction tRNA(Asp) + L-aspartate + ATP = L-aspartyl-tRNA(Asp) + AMP + diphosphate. Its function is as follows. Catalyzes the attachment of L-aspartate to tRNA(Asp) in a two-step reaction: L-aspartate is first activated by ATP to form Asp-AMP and then transferred to the acceptor end of tRNA(Asp). The polypeptide is Aspartate--tRNA ligase (Clostridium botulinum (strain 657 / Type Ba4)).